Consider the following 284-residue polypeptide: N-methyltransferase sirN (284 aa).

The protein belongs to the methyltransferase superfamily. LaeA methyltransferase family.

Its pathway is mycotoxin biosynthesis. N-methyltransferase; part of the gene cluster that mediates the biosynthesis of sirodesmin PL, an epipolythiodioxopiperazine (ETP) characterized by a disulfide bridged cyclic dipeptide and that acts as a phytotoxin which is involved in the blackleg didease of canola. SirD catalyzes the O-prenylation of L-tyrosine (L-Tyr) in the presence of dimethylallyl diphosphate (DMAPP) to yield 4-O-dimethylallyl-L-Tyr, and therefore represents probably the first pathway-specific enzyme in the biosynthesis of sirodesmin PL. 4-O-dimethylallyl-L-Tyr, then undergoes condensation with L-Ser in a reaction catalyzed by the non-ribosomal peptide synthase sirP to form the diketopiperazine (DKP) backbone. Further bishydroxylation of the DKP performed by the cytochrome P450 monooxygenase sirC leads to the production of the intermediate phomamide. This step is essential to form the reactive thiol group required for toxicity of sirodesmin PL. The next steps of sirodesmin biosynthesis are not well understood yet but some predictions could be made from intermediate compounds identification. Phomamide is converted into phomalizarine via oxidation, probably by sirT. Further oxidation, methylation (by sirM or sirN) and reduction steps convert phomalizarine to deacetyl sirodesmin. Finally, acetyltransferase sirH probably acetylates deacetyl sirodesmin to produce sirodesmin PL. This chain is N-methyltransferase sirN, found in Leptosphaeria maculans (Blackleg fungus).